Here is a 24-residue protein sequence, read N- to C-terminus: Lycosin-I (24 aa).

Belongs to the cationic peptide 04 (cupiennin) family. 05 subfamily. As to quaternary structure, monomer in solution. Small size oligomers on the lipid membranes.

The protein localises to the secreted. Its subcellular location is the target cell membrane. In terms of biological role, antimicrobial peptide that inhibits many reference strains of bacteria and fungi. Is potent against Candida species and multidrug-resistant Acinetobacter baumannii (MDRAB). Is probably localized in the cytoplasm after being transported through the cell wall and membrane. Is able to interact with cell membranes and enter into cell plasma to activate the mitochondrial death pathway to sensitize cancer cells for apoptosis, as well as up-regulates p27 to inhibit cell proliferation. It shows very low effect on normal cells, such as erythrocytes, Hek293t cells. It also potently inhibits tumor cell growth in vitro, and suppresses various tumor growth in vivo when tested in human cancer xenograft models. It interacts with the cell membrane and is then internalized into the cytoplasm of cancer cells to initiate the programmable cell death. In addition, this peptide has the therapeutic effects of anti-hypertension by endothelium-dependent vasodilatation via the NO/sGC/cGMP signaling pathway. In vivo, this peptide also shows a significant ability to inhibit T.gondii invasion and proliferation, making it a potential alternative agent for the treatment of toxoplasmosis. This chain is Lycosin-I, found in Lycosa singoriensis (Wolf spider).